We begin with the raw amino-acid sequence, 909 residues long: Short transient receptor potential channel 3 (909 aa).

The disordered stretch occupies residues Met-1–Ala-92. Residues Met-1–Phe-447 are Cytoplasmic-facing. Acidic residues predominate over residues Pro-19–Gly-28. Over residues Pro-47 to Gly-57 the composition is skewed to pro residues. Residues Pro-58–Ser-67 show a composition bias toward low complexity. 4 ANK repeats span residues Ala-99–Val-128, Met-134–Ile-163, Asp-165–Ser-191, and Pro-220–Arg-249. Position 146 (Glu-146) interacts with Ca(2+). Residues Val-448–Ala-465 form a helical membrane-spanning segment. Topologically, residues Ser-466–Thr-496 are extracellular. Asn-477 carries N-linked (GlcNAc...) asparagine glycosylation. Residues Trp-497–Lys-515 form a helical membrane-spanning segment. Residues Glu-513, Glu-516, and Asn-531 each contribute to the Ca(2+) site. Topologically, residues Glu-516–Gln-528 are cytoplasmic. The chain crosses the membrane as a helical span at residues Leu-529–Leu-550. At Ala-551–Asp-594 the chain is on the extracellular side. A helical membrane pass occupies residues Pro-595–Leu-618. Topologically, residues Pro-619–Asp-637 are cytoplasmic. Residues Glu-622–Ala-651 form an ANK 5 repeat. A helical membrane pass occupies residues Ile-638 to Ser-661. Residues Tyr-662 to His-701 lie on the Extracellular side of the membrane. The helical transmembrane segment at Lys-702–Leu-727 threads the bilayer. The Cytoplasmic portion of the chain corresponds to Ile-728–Glu-909. Residues Glu-859, Glu-862, Glu-864, and Asp-871 each coordinate Ca(2+).

It belongs to the transient receptor (TC 1.A.4) family. STrpC subfamily. TRPC3 sub-subfamily. As to quaternary structure, homotetramer. Interacts with ITPR1, ITPR3, MX1 and RNF24. Interacts with JPH2; the interaction is involved in maintaining Ca(2+) homeostasis in skeletal muscle and is mediated by JPH2 'Ser-165' phosphorylation.

It is found in the cell membrane. It carries out the reaction Ca(2+)(in) = Ca(2+)(out). Activated by diacylglycerol (DAG) in a membrane-delimited fashion, independently of protein kinase C. Activated by inositol 1,4,5-triphosphate receptors (ITPR) with bound IP3. May be activated by internal calcium store depletion. Inhibited by intracellular Ca(2+). Functionally, forms a receptor-activated non-selective calcium permeant cation channel. May be operated by a phosphatidylinositol second messenger system activated by receptor tyrosine kinases or G-protein coupled receptors. The sequence is that of Short transient receptor potential channel 3 (Trpc3) from Rattus norvegicus (Rat).